The following is a 175-amino-acid chain: CDP-archaeol synthase (175 aa).

4 helical membrane passes run 41–61 (GLFSGIFCGFIAGCIEIWLSS), 82–102 (LIVVLALASGALFGDMFKSFF), 122–142 (FVVGAWVFTYLVAPEWFVSNF), and 150–170 (VIIITPLLHLTTNIIGYLIGV).

The protein belongs to the CDP-archaeol synthase family. Mg(2+) is required as a cofactor.

Its subcellular location is the cell membrane. The catalysed reaction is 2,3-bis-O-(geranylgeranyl)-sn-glycerol 1-phosphate + CTP + H(+) = CDP-2,3-bis-O-(geranylgeranyl)-sn-glycerol + diphosphate. The protein operates within membrane lipid metabolism; glycerophospholipid metabolism. Catalyzes the formation of CDP-2,3-bis-(O-geranylgeranyl)-sn-glycerol (CDP-archaeol) from 2,3-bis-(O-geranylgeranyl)-sn-glycerol 1-phosphate (DGGGP) and CTP. This reaction is the third ether-bond-formation step in the biosynthesis of archaeal membrane lipids. This chain is CDP-archaeol synthase, found in Methanosarcina barkeri (strain Fusaro / DSM 804).